A 73-amino-acid chain; its full sequence is Antitoxin VapB20 (73 aa).

Antitoxin component of a type II toxin-antitoxin (TA) system. Upon expression in E.coli neutralizes the toxic effect of cognate toxin VapC20. The polypeptide is Antitoxin VapB20 (vapB20) (Mycobacterium tuberculosis (strain ATCC 25618 / H37Rv)).